The chain runs to 58 residues: Proteinase inhibitor PSKP-1 (58 aa).

A Kazal-like domain is found at 1–58 (VIEPKCYKYEGKKCPPDINPVCGTDKRTYYNECALCVFIRQSTKKADKAIKIKKWGKC). Intrachain disulfides connect C6/C36, C14/C33, and C22/C58.

As to quaternary structure, monomer. Skin.

Its subcellular location is the secreted. Has antibacterial activity against Gram-negative bacterium E.coli ATCC 11229. Shows hemagglutinating activity. Inhibits prolyl endopeptidase, but not trypsin, chymotrypsin, V8 protease and proteinase K. May have a role in mucosal defense against microbes by interacting directly with their membranes. The sequence is that of Proteinase inhibitor PSKP-1 from Phyllomedusa sauvagei (Sauvage's leaf frog).